We begin with the raw amino-acid sequence, 1499 residues long: MMMARKQDVRIPTYNISVVGLSGTEKEKGQCGIGKSCLCNRFVRPSADEFHLDHTSVLSTSDFGGRVVNNDHFLYWGEVSRSLEDCVECKMHIVEQTEFIDDQTFQPHRSTALQPYIKRAAATKLASAEKLMYFCTDQLGLEQDFEQKQMPDGKLLVDGFLLGIDVSRGMNRNFDDQLKFVSNLYNQLAKTKKPIVIVLTKCDEGVERYIRDAHTFALSKKNLQVVETSARSNVNVDLAFSTLVQLIDKSRGKTKIIPYFEALKQQSQQIATAKDKYEWLVSRIVKSHNENWLSVSRKMQASPEYQDYVYLEGTQKAKKLFLQHIHRLKHEHIERRRKLYLAALPLAFEALIPNLDEVDHLSCIKAKKLLETKPEFLKWFVVLEETPWDETSHIDNMENERIPFDLMDTVPAEQLYETHLEKLRNERKRAEMRRAFKENLETSPFITPGKPWEEARSFIMNEDFYQWLEESVYMDIYGKHQKQIIDRAKEEFQELLLEYSELFYELELDAKPSKEKMGVIQDVLGEEQRFKALQKLQAERDALILKHIHFVYHPTKETCPSCPACVDAKIEHLISSRFIRPSDRNQKNSLSDPNIDRINLVILGKDGLARELANEIRALCTNDDKYVIDGKMYELSLRPIEGNVRLPVNSFQTPTFQPHGCLCLYNSKESLSYVVESIEKSRESTLGRRDNHLVHLPLTLILVNKRGDTSGETLHSLIQQGQQIASKLQCVFLDPASAGIGYGRNINEKQISQVLKGLLDSKRNLNLVSSTASIKDLADVDLRIVMCLMCGDPFSADDILSPVLQSQTCKSSHCGSSNSVLLELPIGVHKKRIELSVLSYHSSFSIRKSRLVHGYIVFYSAKRKASLAMLRAFLCEVQDIIPIQLVALTDGAIDVLDNDLSREQLTEGEEIAQEIDGRFTSIPCSQPQHKLELFHPFFKDVVEKKNIIEATHMYDNVAEACSTTEEVFNSPRAGSPLCNSNLQDSEEDVEPPSYHLFREDATLPSLSKDHSKFSMELEGNDGLSFIMSNFESKLNNKVPPPVKPKPPVHFEITKDLSYLDQGHREGQRKSMSSSPWMPQDGFDPSDYAEPMDAVVKPRNEEENIYSVPHDSTQGKIITIRNINKAQSNGSGNGSDSEMDTSSLERGRKVSAVSKPVLYRTRCTRLGRFASYRTSFSVGSDDELGPIRKKEEDQASQGYKGDNAVIPYETDEDPRRRNILRSLRRNTKKPKPKPRPSITKATWESNYFGVPLTTVVTPEKPIPIFIERCIEYIEATGLSTEGIYRVSGNKSEMESLQRQFDQDHNLDLAEKDFTVNTVAGAMKSFFSELPDPLVPYSMQIDLVEAHKINDREQKLHALKEVLKKFPKENHEVFKYVISHLNRVSHNNKVNLMTSENLSICFWPTLMRPDFSSMDALTATRSYQTIIELFIQQCPFFFYNRPISEPPGAAPGSPSAMAPTVPFLTSTPATSQPSPPQSPPPTPQSPMQPLLSSQLQAEHTL.

Residues 1–266 are has GTPase activity, required for proper localization; it reads MMMARKQDVR…IPYFEALKQQ (266 aa). Residues lysine 28, 33–37, leucine 52, serine 56, 95–97, 201–203, and 229–231 each bind GTP; these read IGKSC, EQT, KCD, and SAR. FF domains are found at residues 270–327, 368–422, 429–483, and 485–550; these read IATA…HIHR, KLLE…HLEK, RAEM…HQKQ, and IDRA…HIHF. Tyrosine 308 is modified (phosphotyrosine). Serine 589 is subject to Phosphoserine. The region spanning 592–767 is the pG1 pseudoGTPase domain; that stretch reads DPNIDRINLV…LLDSKRNLNL (176 aa). Phosphoserine occurs at positions 770 and 773. Residues 783–947 enclose the pG2 pseudoGTPase domain; that stretch reads RIVMCLMCGD…FKDVVEKKNI (165 aa). A phosphoserine mark is found at serine 970, serine 975, serine 985, and serine 1072. At tyrosine 1087 the chain carries Phosphotyrosine. Position 1105 is a phosphotyrosine; by ABL2 and PTK6 (tyrosine 1105). The span at 1124-1141 shows a compositional bias: polar residues; the sequence is KAQSNGSGNGSDSEMDTS. Positions 1124-1148 are disordered; sequence KAQSNGSGNGSDSEMDTSSLERGRK. Phosphoserine occurs at positions 1134, 1142, 1150, 1176, 1179, and 1221. Residues 1177–1207 form a disordered region; it reads VGSDDELGPIRKKEEDQASQGYKGDNAVIPY. Residues 1213–1236 form a required for phospholipid binding and regulation of the substrate preference region; that stretch reads PRRRNILRSLRRNTKKPKPKPRPS. At threonine 1226 the chain carries Phosphothreonine. At serine 1236 the chain carries Phosphoserine. Positions 1249 to 1436 constitute a Rho-GAP domain; sequence VPLTTVVTPE…LFIQQCPFFF (188 aa). The interval 1446–1499 is disordered; that stretch reads GAAPGSPSAMAPTVPFLTSTPATSQPSPPQSPPPTPQSPMQPLLSSQLQAEHTL. Positions 1448-1470 are enriched in low complexity; it reads APGSPSAMAPTVPFLTSTPATSQ. The span at 1471–1484 shows a compositional bias: pro residues; that stretch reads PSPPQSPPPTPQSP. Phosphoserine occurs at positions 1472 and 1476. At threonine 1480 the chain carries Phosphothreonine. Serine 1483 is subject to Phosphoserine. Low complexity predominate over residues 1485 to 1499; sequence MQPLLSSQLQAEHTL.

As to quaternary structure, interacts with RASA1. Interacts with the general transcription factor GTF2I, the interaction sequesters GTF2I in the cytoplasm. Post-translationally, phosphorylation of Tyr-1105 by PTK6 promotes the association with RASA1, inactivating RHOA while activating RAS. Phosphorylation at Tyr-308 by PDGFRA inhibits binding to GTF2I. Phosphorylated by PRKCA at Ser-1221 and Thr-1226, induces relocalization from the cytoplasm to regions of plasma membrane ruffling and prevents the binding and substrate specificity regulation by phospholipids. In brain, phosphorylated by FYN and SRC. During focal adhesion formation, phosphorylated by MAPK1 and MAPK3 at the C-terminal region, probably at Ser-1451, Ser-1476, Thr-1480 and Ser-1483. Phosphorylation by MAPK1 and MAPK3 inhibits GAP function and localizes ARGHAP35 away from newly forming focal adhesions and stress fibers in cells spreading on fibronectin. Phosphorylation at Ser-1476 and Thr-1480 by GSK3B requires priming by MAPK and inhibits RhoGAP activity and modulates polarized cell migration. In terms of tissue distribution, ubiquitously expressed.

Its subcellular location is the cytoplasm. The protein localises to the cytoskeleton. The protein resides in the cilium basal body. It is found in the nucleus. It localises to the cell membrane. Its function is as follows. Rho GTPase-activating protein (GAP). Binds several acidic phospholipids which inhibits the Rho GAP activity to promote the Rac GAP activity. This binding is inhibited by phosphorylation by PRKCA. Involved in cell differentiation as well as cell adhesion and migration, plays an important role in retinal tissue morphogenesis, neural tube fusion, midline fusion of the cerebral hemispheres and mammary gland branching morphogenesis. Transduces signals from p21-ras to the nucleus, acting via the ras GTPase-activating protein (GAP). Transduces SRC-dependent signals from cell-surface adhesion molecules, such as laminin, to promote neurite outgrowth. Regulates axon outgrowth, guidance and fasciculation. Modulates Rho GTPase-dependent F-actin polymerization, organization and assembly, is involved in polarized cell migration and in the positive regulation of ciliogenesis and cilia elongation. During mammary gland development, is required in both the epithelial and stromal compartments for ductal outgrowth. Represses transcription of the glucocorticoid receptor by binding to the cis-acting regulatory sequence 5'-GAGAAAAGAAACTGGAGAAACTC-3'; this function is however unclear and would need additional experimental evidences. The chain is Rho GTPase-activating protein 35 from Rattus norvegicus (Rat).